The primary structure comprises 5634 residues: Hemicentin-1 (5634 aa).

The signal sequence occupies residues 1-21 (MIAQEVVHTVFLVALFRSSLA). The region spanning 41–216 (TLAFVFDVTG…EVLKWVEEAV (176 aa)) is the VWFA domain. Ig-like C2-type domains are found at residues 431–517 (PKVT…FDVS), 520–607 (PPII…VFLT), 612–697 (PKVT…STLR), 702–788 (PKLV…LTLD), 793–883 (PVFI…TTVT), 890–976 (PLIG…TSVA), 981–1067 (PSIQ…VQLT), 1072–1166 (PRVF…VKLS), 1171–1254 (PKIQ…AEVT), 1261–1353 (PSVE…YNLK), 1357–1446 (PPVI…FSVN), 1451–1540 (PSIL…IKLT), 1545–1633 (PSIK…FHVD), 1638–1723 (PTIE…REIK), 1732–1820 (PAVE…FEVT), 1825–1913 (PTIK…TQLH), 1918–2006 (PSLD…YSLQ), 2011–2096 (PSIS…RDID), 2103–2189 (PNIM…YNVN), 2194–2284 (PSIY…YNLQ), 2289–2378 (PSIT…YDLS), 2383–2472 (PSII…FGLS), 2477–2565 (PHIV…FRLN), 2570–2661 (PTIA…YEVK), 2665–2762 (PPII…VNIQ), 2765–2863 (PSFQ…YDVH), 2867–2958 (PPVI…FNLN), 2962–3050 (PPSV…VSLT), and 3055–3145 (PSIK…FHLN). Disulfide bonds link C451–C499 and C541–C591. O-linked (GalNAc...) threonine glycosylation is present at T615. 11 disulfide bridges follow: C633-C681, C723-C772, C814-C867, C911-C960, C1002-C1051, C1101-C1150, C1192-C1240, C1287-C1337, C1381-C1430, C1474-C1524, and C1568-C1617. T1292 and T1386 each carry an O-linked (GalNAc...) threonine glycan. T1639 carries O-linked (GalNAc...) threonine glycosylation. 2 cysteine pairs are disulfide-bonded: C1662-C1711 and C1755-C1804. An O-linked (GalNAc...) threonine glycan is attached at T1826. Cystine bridges form between C1847/C1897, C1941/C1990, C2032/C2082, C2124/C2173, C2217/C2268, C2313/C2362, C2407/C2456, C2500/C2549, C2596/C2645, C2695/C2744, C2798/C2847, C2893/C2942, C2985/C3034, and C3080/C3129. The O-linked (GalNAc...) threonine glycan is linked to T3151. 15 Ig-like C2-type domains span residues 3155–3227 (PETE…VASN), 3244–3334 (PSVA…FNLN), 3339–3428 (PKIR…YSLQ), 3433–3515 (PNMD…GEVS), 3526–3614 (PHIN…YLVR), 3619–3707 (PNIA…FNLT), 3712–3798 (PSIG…IDLQ), 3803–3891 (PSIA…VDLT), 3896–3982 (PTIA…VTLR), 3987–4073 (PVIQ…VKLN), 4077–4163 (PPVI…STLT), 4168–4252 (PRIQ…RIVT), 4259–4332 (PTFT…AENS), 4347–4434 (PPVF…MSLT), and 4439–4526 (PIIT…VIVQ). Disulfide bonds link C3172–C3223, C3267–C3318, C3363–C3412, C3456–C3505, C3549–C3598, C3642–C3691, C3733–C3782, and C3824–C3875. O-linked (GalNAc...) threonine glycosylation occurs at T3897. Cystine bridges form between C3917–C3966, C4008–C4057, C4099–C4147, C4189–C4238, C4280–C4327, C4370–C4418, C4460–C4508, C4540–C4577, C4544–C4582, C4555–C4567, C4597–C4634, C4601–C4639, C4612–C4624, C4654–C4691, C4658–C4696, C4669–C4681, C4711–C4748, C4715–C4753, C4726–C4738, C4768–C4805, C4772–C4810, C4783–C4795, C4825–C4862, C4829–C4867, and C4840–C4852. O-linked (GalNAc...) threonine glycosylation is present at T4379. TSP type-1 domains lie at 4528 to 4583 (HGGF…KLCP), 4585 to 4640 (DGHW…RPCP), 4642 to 4697 (HGVW…RHCP), 4699 to 4754 (DGRW…DPCP), 4756 to 4811 (HGNW…DMCP), and 4813 to 4868 (DGSW…QACP). Positions 4870–5092 (GPQRARGSVI…SKGDRSNQCP (223 aa)) constitute a Nidogen G2 beta-barrel domain. The EGF-like 1; calcium-binding domain maps to 5106-5145 (DEDECTAGNPCSHTCHNAIGAYYCSCPKGLTIAADGRTCQ). 3 cysteine pairs are disulfide-bonded: C5110–C5120, C5116–C5129, and C5131–C5144. The region spanning 5146–5189 (DIDECALGGHTCRAGQDCDNTIGSYRCVVHCGTGFRRTSDGLSC) is the EGF-like 2; calcium-binding domain. The 38-residue stretch at 5191–5228 (DINECQESSPCHQRCFNVIGSFHCGCEAGYQLKGRKCI) folds into the EGF-like 3; calcium-binding domain. Cystine bridges form between C5195–C5205, C5201–C5214, and C5216–C5227. One can recognise an EGF-like 4; calcium-binding domain in the interval 5229–5269 (DVNECRQNVCRPDQHCKNTRGGYKCIDLCPSGMTKAENGTC). Residues 5271-5306 (DIDECKDGTHQCRYNQICENTRGSYRCACPRGYRSQ) form the EGF-like 5; calcium-binding domain. Disulfide bonds link C5275–C5288, C5282–C5297, C5318–C5329, C5325–C5338, C5340–C5353, C5435–C5445, C5441–C5454, and C5456–C5469. The EGF-like 6; calcium-binding domain maps to 5314–5354 (DINECEQVPKPCAHQCSNSPGSFKCICLPGQQLLGDGKSCA). The EGF-like 7; calcium-binding domain occupies 5431-5470 (DIDECQNRDTCQHECKNTIGSYQCVCPPGYRLMLNGKTCQ).

As to expression, in the kidney, expressed in the glomerulus (at protein level). Expressed in whisker and hair follicles, eye, tongue, and splenic and lymph node conduits (at protein level). In the embryo, localizes to the cleavage furrow at the two-cell stage (at protein level). In neonatal skin, expressed throughout the dermis (at protein level). In adult skin, strongly concentrated at the dermal side of the basement membrane but not detectable in the deeper dermis. Shows tendon-specific localization at the myotendinous junction and is also detected in the perichondrium (at protein level). Expressed by chondrocytes residing in articular cartilage and the femoral growth plate of 52 week old mice (at protein level). Expressed in vascular endothelial cells in coronary arteries and sparsely in endocardial endothelium (at protein level). Expressed in skin, tongue, lung and eye. At 14.5 dpc, expressed in the vibrissae, dermis, forelimb, kidney, intestine, lung and iliac cartilage where expression is found mainly in mesenchymal cells.

The protein resides in the secreted. Its subcellular location is the extracellular space. The protein localises to the extracellular matrix. It is found in the basement membrane. It localises to the cytoplasm. The protein resides in the cell junction. Its subcellular location is the cleavage furrow. Functionally, involved in transforming growth factor beta-mediated rearrangement of the podocyte cytoskeleton which includes reduction of F-actin fibers and broadening, flattening and elongation of podocytes. Plays a role in basement membrane organization. May promote cleavage furrow maturation during cytokinesis in preimplantation embryos. May play a role in the architecture of adhesive and flexible epithelial cell junctions. May play a role during myocardial remodeling by imparting an effect on cardiac fibroblast migration. This is Hemicentin-1 from Mus musculus (Mouse).